Reading from the N-terminus, the 359-residue chain is (2E,6E)-farnesyl diphosphate synthase (359 aa).

The interval 1–21 (MRGTDEKYGLPPQPDSDRMTR) is disordered. Positions 73, 76, and 105 each coordinate isopentenyl diphosphate. Residues Asp112 and Asp116 each contribute to the Mg(2+) site. A DDXXD motif motif is present at residues 112–116 (DDLMD). Arg121 provides a ligand contact to (2E)-geranyl diphosphate. Residue Arg122 coordinates isopentenyl diphosphate. (2E)-geranyl diphosphate is bound by residues Lys201, Thr202, and Gln239. The DDXXD motif motif lies at 242–246 (DDLLG). Residues Lys256 and Lys266 each contribute to the (2E)-geranyl diphosphate site.

It belongs to the FPP/GGPP synthase family. Mg(2+) is required as a cofactor.

It localises to the cytoplasm. It carries out the reaction isopentenyl diphosphate + (2E)-geranyl diphosphate = (2E,6E)-farnesyl diphosphate + diphosphate. The protein operates within isoprenoid biosynthesis; farnesyl diphosphate biosynthesis; farnesyl diphosphate from geranyl diphosphate and isopentenyl diphosphate. Functionally, catalyzes the condensation of isopentenyl pyrophosphate (IPP) with geranyl diphosphate (GPP) to yield (2E,6E)-farnesyl diphosphate (E,E-FPP). May be used for squalene and possibly sterol biosynthesis. This chain is (2E,6E)-farnesyl diphosphate synthase, found in Mycobacterium bovis (strain ATCC BAA-935 / AF2122/97).